Consider the following 595-residue polypeptide: Outer dynein arm-docking complex subunit 3 (595 aa).

Residues 1–69 (MTSPLCRAAS…RGAGKPSVHS (69 aa)) are disordered. Coiled-coil stretches lie at residues 94–327 (WNIK…REHL) and 385–473 (FAQL…ASKL).

As to quaternary structure, component of the outer dynein arm-docking complex along with ODAD1, ODAD2, ODAD4 and CLXN. Interacts with ODAD1. Interacts with PIERCE1 and PIERCE2; the interactions link the outer dynein arms docking complex (ODA-DC) to the internal microtubule inner proteins (MIP) in cilium axoneme.

It is found in the cytoplasm. Its subcellular location is the cytoskeleton. It localises to the cilium basal body. The protein localises to the microtubule organizing center. The protein resides in the centrosome. It is found in the centriole. Its subcellular location is the cilium axoneme. Functionally, component of the outer dynein arm-docking complex (ODA-DC) that mediates outer dynein arms (ODA) binding onto the doublet microtubule. Involved in mediating assembly of both ODAs and their axonemal docking complex onto ciliary microtubules. The polypeptide is Outer dynein arm-docking complex subunit 3 (Homo sapiens (Human)).